Here is a 159-residue protein sequence, read N- to C-terminus: Phosphopantetheine adenylyltransferase (159 aa).

Residue threonine 10 coordinates substrate. Residues 10–11 (TF) and histidine 18 each bind ATP. Positions 42, 74, and 88 each coordinate substrate. Residues 89–91 (GLR), glutamate 99, and 124–130 (NAFISSS) contribute to the ATP site.

Belongs to the bacterial CoaD family. In terms of assembly, homohexamer. Requires Mg(2+) as cofactor.

The protein resides in the cytoplasm. The enzyme catalyses (R)-4'-phosphopantetheine + ATP + H(+) = 3'-dephospho-CoA + diphosphate. It functions in the pathway cofactor biosynthesis; coenzyme A biosynthesis; CoA from (R)-pantothenate: step 4/5. In terms of biological role, reversibly transfers an adenylyl group from ATP to 4'-phosphopantetheine, yielding dephospho-CoA (dPCoA) and pyrophosphate. The protein is Phosphopantetheine adenylyltransferase of Campylobacter fetus subsp. fetus (strain 82-40).